A 151-amino-acid chain; its full sequence is Large ribosomal subunit protein eL19 (151 aa).

Positions 57 to 81 (KKGISSARVKKLKEQRKKGRRRGPG) are enriched in basic residues. Residues 57-95 (KKGISSARVKKLKEQRKKGRRRGPGSRRGAAGARTPPKE) form a disordered region.

Belongs to the eukaryotic ribosomal protein eL19 family. Part of the 50S ribosomal subunit.

Binds to the 23S rRNA. The sequence is that of Large ribosomal subunit protein eL19 from Methanocaldococcus jannaschii (strain ATCC 43067 / DSM 2661 / JAL-1 / JCM 10045 / NBRC 100440) (Methanococcus jannaschii).